Reading from the N-terminus, the 906-residue chain is Protein translocase subunit SecA (906 aa).

ATP contacts are provided by residues Gln-87, 105–109, and Asp-507; that span reads GEGKT. The Zn(2+) site is built by Cys-890, Cys-892, Cys-901, and His-902.

This sequence belongs to the SecA family. As to quaternary structure, monomer and homodimer. Part of the essential Sec protein translocation apparatus which comprises SecA, SecYEG and auxiliary proteins SecDF-YajC and YidC. It depends on Zn(2+) as a cofactor.

Its subcellular location is the cell inner membrane. It localises to the cytoplasm. The enzyme catalyses ATP + H2O + cellular proteinSide 1 = ADP + phosphate + cellular proteinSide 2.. In terms of biological role, part of the Sec protein translocase complex. Interacts with the SecYEG preprotein conducting channel. Has a central role in coupling the hydrolysis of ATP to the transfer of proteins into and across the cell membrane, serving both as a receptor for the preprotein-SecB complex and as an ATP-driven molecular motor driving the stepwise translocation of polypeptide chains across the membrane. This Thiobacillus denitrificans (strain ATCC 25259 / T1) protein is Protein translocase subunit SecA.